The chain runs to 304 residues: MARTDTDSWDLASSVGATATMVAAARAIASTEPNALIDDPYAADLVRKVGLEFFTKLVDGDIALDGDDAAAAGLMVSMMAVRTRFFDDFFCDAAGAGIRQSVILAAGLDSRAYRLGWPAGTVVYEIDQPRVIEAKTAAMAEIGASPTAERRTVAVDLRDDWPAALRAAGFDAATPTAWIAEGLLVYLPPEAQDRLFDNITALSARGSRLATEYHPDITSTLRGRGQAMSERWRDHGFDVDLSDLWYGGDRNAADEYLAGHGWQVSTRPRPEVFAAYGRTFPDLTLTGDDNAAMRQSVAITATRS.

S-adenosyl-L-methionine-binding positions include D127 and D156 to L157.

It belongs to the UPF0677 family.

In terms of biological role, exhibits S-adenosyl-L-methionine-dependent methyltransferase activity. This Mycolicibacterium smegmatis (strain ATCC 700084 / mc(2)155) (Mycobacterium smegmatis) protein is Putative S-adenosyl-L-methionine-dependent methyltransferase MSMEG_1481/MSMEI_1445.